A 240-amino-acid polypeptide reads, in one-letter code: Large ribosomal subunit protein uL1c (240 aa).

It belongs to the universal ribosomal protein uL1 family. As to quaternary structure, part of the 50S ribosomal subunit.

Its subcellular location is the plastid. It localises to the chloroplast. Functionally, binds directly to 23S rRNA. Might be involved in E site tRNA release (Potential). This Cyanidium caldarium (Red alga) protein is Large ribosomal subunit protein uL1c (rpl1).